The sequence spans 237 residues: DNA repair protein RecO (237 aa).

The protein belongs to the RecO family.

Its function is as follows. Involved in DNA repair and RecF pathway recombination. The chain is DNA repair protein RecO from Cereibacter sphaeroides (strain ATCC 17025 / ATH 2.4.3) (Rhodobacter sphaeroides).